The following is an 80-amino-acid chain: Small ribosomal subunit protein bS18 (80 aa).

It belongs to the bacterial ribosomal protein bS18 family. As to quaternary structure, part of the 30S ribosomal subunit. Forms a tight heterodimer with protein bS6.

In terms of biological role, binds as a heterodimer with protein bS6 to the central domain of the 16S rRNA, where it helps stabilize the platform of the 30S subunit. This is Small ribosomal subunit protein bS18 from Staphylococcus aureus (strain Mu3 / ATCC 700698).